The following is a 786-amino-acid chain: AT-rich interactive domain-containing protein 3 (786 aa).

Low complexity predominate over residues 1 to 16 (MENLTEIESTMESLTE). 3 disordered regions span residues 1-182 (MENL…HHAD), 199-251 (SGDH…IPAN), and 395-420 (DTTVDSTNNKDAHVEANTERQDNSSA). Composition is skewed to basic and acidic residues over residues 18–64 (ESER…HEDS) and 87–97 (DLPKIDDEKNS). Positions 130-139 (ENIVSSEVSS) are enriched in low complexity. Basic and acidic residues-rich tracts occupy residues 141–156 (ILKDDGDAVEVDRDTA), 169–182 (KLSEDTGSPHHHAD), 199–219 (SGDHEEFPVNPDNKHSEENQS), 234–248 (AEEREIISPGEHKEI), and 402–416 (NNKDAHVEANTERQD). One can recognise an ARID domain in the interval 494–585 (EEDQSAFMKE…ALLEYERHKV (92 aa)). The disordered stretch occupies residues 606-638 (QASGSGRARRDAASRAMQGWHSQRLNGNGEVSD). The region spanning 686–786 (VTVVDVGPPA…FVRVPLEQLE (101 aa)) is the sHSP domain.

The protein belongs to the small heat shock protein (HSP20) family.

The protein localises to the nucleus. In Arabidopsis thaliana (Mouse-ear cress), this protein is AT-rich interactive domain-containing protein 3 (ARID3).